A 646-amino-acid chain; its full sequence is Alkyl/aryl-sulfatase BDS1 (646 aa).

M1 carries the post-translational modification N-acetylmethionine. The Zn(2+) site is built by H162, H164, D166, H167, E273, E292, and H337.

It belongs to the metallo-beta-lactamase superfamily. Type III sulfatase family. Requires Zn(2+) as cofactor.

Its function is as follows. Alkyl/aryl-sulfatase. Enables the use of SDS and 4-nitrocatechol as sulfur source. The protein is Alkyl/aryl-sulfatase BDS1 (BDS1) of Saccharomyces cerevisiae (strain ATCC 204508 / S288c) (Baker's yeast).